Consider the following 454-residue polypeptide: MATQPPPARPPPPLTSSPYPYAAAPDIIRAHQKDAYFQGVLANRLSDLHRRLRGARSAHAWAAETRTFAAALYLCLTTLLGNRTLGEEYCDLVQVEEAPSKLFASSSSKAADDHIYENGLGGGGDGGPLLPSLPRRAGYILTAIVLPHLASRALPSVRSAIRKRLQSRLATLSRRRQQTGTKSGSGRGGRGGGGGITEYRVLRYLLTHLTPLTSGAHFRAATLAVFYFTGAYYELSKWVWGLRYVFTTRAGRVVDDDHNRHHHSPQHGGGNGGRAGYEVLGVLLVVQMAVRAWLHVREQLSSGSVAGGGGEEEEDGEDGFRERTAFGPGTNVDVSLDEHAFTSNNELLGGGGGGGGSSSQRSLGEIGAMAHTPVLKAGRARYDLGTSDKVMGWIKGAQQRKCTLCLEELKDPAATQCGHVFCWACIGDWVREKPECPLCRREAMVQHILPLRAA.

The Peroxisomal matrix segment spans residues methionine 1–alanine 23. The chain crosses the membrane as a helical span at residues alanine 24–arginine 53. A topological domain (cytoplasmic) is located at residue glycine 54. A helical membrane pass occupies residues alanine 55–leucine 76. Residues threonine 77–serine 132 lie on the Peroxisomal matrix side of the membrane. Residues leucine 133–leucine 165 traverse the membrane as a helical segment. The Cytoplasmic portion of the chain corresponds to glutamine 166 to valine 201. Positions threonine 171–glycine 194 are disordered. Gly residues predominate over residues serine 183–glycine 194. Residues leucine 202–threonine 229 form a helical membrane-spanning segment. Over glycine 230 to glycine 276 the chain is Peroxisomal matrix. The chain crosses the membrane as a helical span at residues tyrosine 277–valine 296. Residues arginine 297–alanine 454 are Cytoplasmic-facing. The disordered stretch occupies residues serine 302–glycine 329. Positions 402, 405, 417, 419, 422, 425, 436, and 439 each coordinate Zn(2+). The RING-type zinc-finger motif lies at cysteine 402–arginine 440.

It belongs to the pex2/pex10/pex12 family. In terms of assembly, component of the PEX2-PEX10-PEX12 retrotranslocation channel, composed of PEX2, PEX10 and PEX12.

The protein resides in the peroxisome membrane. It catalyses the reaction S-ubiquitinyl-[E2 ubiquitin-conjugating enzyme]-L-cysteine + [acceptor protein]-L-lysine = [E2 ubiquitin-conjugating enzyme]-L-cysteine + N(6)-ubiquitinyl-[acceptor protein]-L-lysine.. It participates in protein modification; protein ubiquitination. Its activity is regulated as follows. The E3 ubiquitin-protein ligase activity is stimulated by PEX12. E3 ubiquitin-protein ligase component of a retrotranslocation channel required for peroxisome organization by mediating export of the PEX5 receptor from peroxisomes to the cytosol, thereby promoting PEX5 recycling. The retrotranslocation channel is composed of PEX2, PEX10 and PEX12; each subunit contributing transmembrane segments that coassemble into an open channel that specifically allows the passage of PEX5 through the peroxisomal membrane. PEX10 also regulates PEX5 recycling by acting as a E3 ubiquitin-protein ligase. When PEX5 recycling is compromised, PEX10 catalyzes polyubiquitination of PEX5 during its passage through the retrotranslocation channel, leading to its degradation. In Thermothelomyces thermophilus (strain ATCC 42464 / BCRC 31852 / DSM 1799) (Sporotrichum thermophile), this protein is Peroxisome assembly protein 10.